Here is a 723-residue protein sequence, read N- to C-terminus: tRNA (guanine(27)-N(2))-dimethyltransferase (723 aa).

Residues 1-10 show a composition bias toward acidic residues; sequence MENMAEEELL. Residues 1–72 form a disordered region; it reads MENMAEEELL…SLASVPEEAE (72 aa). Thr-23 is modified (phosphothreonine). Low complexity predominate over residues 32 to 44; that stretch reads PAADTALDSAPTP. Residues 45–59 show a composition bias toward pro residues; it reads DSAPAPALAPAPAPA. Ser-61 carries the post-translational modification Phosphoserine. A Nucleolar localization signal motif is present at residues 128-132; that stretch reads HKLRR. A C2H2-type zinc finger spans residues 177 to 199; sequence YHCIICSATITRRTDMLGHVKRH. One can recognise a Trm1 methyltransferase domain in the interval 220-679; sequence EVLKETDTDI…ASLTQFKSIL (460 aa). 4 residues coordinate S-adenosyl-L-methionine: Arg-253, Asp-300, Asp-348, and Ala-349. Residues Cys-479, Cys-482, Cys-504, and Cys-506 each coordinate Zn(2+). Lys-576 is covalently cross-linked (Glycyl lysine isopeptide (Lys-Gly) (interchain with G-Cter in SUMO2)). Position 603 is a phosphoserine (Ser-603).

Belongs to the class I-like SAM-binding methyltransferase superfamily. Trm1 family.

The protein resides in the nucleus. Its subcellular location is the nucleolus. It carries out the reaction guanosine(27) in tRNA(Tyr) + 2 S-adenosyl-L-methionine = N(2)-dimethylguanosine(27) in tRNA(Tyr) + 2 S-adenosyl-L-homocysteine + 2 H(+). Functionally, specifically dimethylates a single guanine residue at position 27 of tRNA(Tyr) using S-adenosyl-L-methionine as donor of the methyl groups. Dimethylation at position 27 of tRNA(Tyr) is required for efficient translation of tyrosine codons. Also required to maintain 3-(3-amino-3-carboxypropyl)uridine (acp3U) in the D-loop of several cytoplasmic tRNAs. In Rattus norvegicus (Rat), this protein is tRNA (guanine(27)-N(2))-dimethyltransferase.